Reading from the N-terminus, the 101-residue chain is MSRRCELTAKGAQVGHKVSHSNIKTKRRFLPNLVNVTFLSDALGRPVRLRVSTNALKSVDHRGGLDGFLLKAKDAELSPKAVDIKRQIQKKKLTAELAALA.

Belongs to the bacterial ribosomal protein bL28 family.

The protein is Large ribosomal subunit protein bL28 of Rhodopseudomonas palustris (strain BisB18).